The following is a 466-amino-acid chain: uncharacterized protein (466 aa).

Belongs to the myoviridae tail sheath protein family.

This is an uncharacterized protein from Bacillus subtilis (strain 168).